The primary structure comprises 81 residues: Photosystem I iron-sulfur center (81 aa).

4Fe-4S ferredoxin-type domains follow at residues 2–31 (SHAV…MVPW) and 39–68 (IAAS…IRVY). The [4Fe-4S] cluster site is built by C11, C14, C17, C21, C48, C51, C54, and C58.

The cyanobacterial PSI reaction center is composed of one copy each of PsaA,B,C,D,E,F,I,J,K,L,M and X, and forms trimeric complexes. Requires [4Fe-4S] cluster as cofactor.

It is found in the cellular thylakoid membrane. The catalysed reaction is reduced [plastocyanin] + hnu + oxidized [2Fe-2S]-[ferredoxin] = oxidized [plastocyanin] + reduced [2Fe-2S]-[ferredoxin]. Apoprotein for the two 4Fe-4S centers FA and FB of photosystem I (PSI); essential for photochemical activity. FB is the terminal electron acceptor of PSI, donating electrons to ferredoxin. The C-terminus interacts with PsaA/B/D and helps assemble the protein into the PSI complex. Required for binding of PsaD and PsaE to PSI. PSI is a plastocyanin/cytochrome c6-ferredoxin oxidoreductase, converting photonic excitation into a charge separation, which transfers an electron from the donor P700 chlorophyll pair to the spectroscopically characterized acceptors A0, A1, FX, FA and FB in turn. The chain is Photosystem I iron-sulfur center from Prochlorococcus marinus (strain MIT 9303).